A 287-amino-acid polypeptide reads, in one-letter code: Protease HtpX (287 aa).

2 helical membrane-spanning segments follow: residues 4–24 (ILLF…VLNI) and 36–56 (LSGL…ISLL). His143 lines the Zn(2+) pocket. Glu144 is a catalytic residue. Residue His147 participates in Zn(2+) binding. A run of 2 helical transmembrane segments spans residues 158-178 (LMQG…ANIV) and 192-212 (MVYF…ASFI). Glu221 is a binding site for Zn(2+).

It belongs to the peptidase M48B family. Requires Zn(2+) as cofactor.

Its subcellular location is the cell inner membrane. In Vibrio cholerae serotype O1 (strain ATCC 39315 / El Tor Inaba N16961), this protein is Protease HtpX.